The chain runs to 315 residues: Pantothenate kinase (315 aa).

Position 94–101 (94–101) interacts with ATP; that stretch reads GSVAVGKS.

Belongs to the prokaryotic pantothenate kinase family.

It is found in the cytoplasm. It catalyses the reaction (R)-pantothenate + ATP = (R)-4'-phosphopantothenate + ADP + H(+). The protein operates within cofactor biosynthesis; coenzyme A biosynthesis; CoA from (R)-pantothenate: step 1/5. The protein is Pantothenate kinase of Shewanella amazonensis (strain ATCC BAA-1098 / SB2B).